The sequence spans 484 residues: tRNA sulfurtransferase (484 aa).

Residues 62–166 (GPVIDELVRI…DDSYHIAHRR (105 aa)) enclose the THUMP domain. ATP-binding positions include 184-185 (LI), Lys266, Gly288, and Gln297. Cys345 and Cys456 are joined by a disulfide. The region spanning 404–482 (PSVDDVIIDV…GHGNIKVYAP (79 aa)) is the Rhodanese domain. Cys456 functions as the Cysteine persulfide intermediate in the catalytic mechanism.

Belongs to the ThiI family.

Its subcellular location is the cytoplasm. It carries out the reaction [ThiI sulfur-carrier protein]-S-sulfanyl-L-cysteine + a uridine in tRNA + 2 reduced [2Fe-2S]-[ferredoxin] + ATP + H(+) = [ThiI sulfur-carrier protein]-L-cysteine + a 4-thiouridine in tRNA + 2 oxidized [2Fe-2S]-[ferredoxin] + AMP + diphosphate. It catalyses the reaction [ThiS sulfur-carrier protein]-C-terminal Gly-Gly-AMP + S-sulfanyl-L-cysteinyl-[cysteine desulfurase] + AH2 = [ThiS sulfur-carrier protein]-C-terminal-Gly-aminoethanethioate + L-cysteinyl-[cysteine desulfurase] + A + AMP + 2 H(+). Its pathway is cofactor biosynthesis; thiamine diphosphate biosynthesis. Its function is as follows. Catalyzes the ATP-dependent transfer of a sulfur to tRNA to produce 4-thiouridine in position 8 of tRNAs, which functions as a near-UV photosensor. Also catalyzes the transfer of sulfur to the sulfur carrier protein ThiS, forming ThiS-thiocarboxylate. This is a step in the synthesis of thiazole, in the thiamine biosynthesis pathway. The sulfur is donated as persulfide by IscS. The polypeptide is tRNA sulfurtransferase (Marinobacter nauticus (strain ATCC 700491 / DSM 11845 / VT8) (Marinobacter aquaeolei)).